The sequence spans 361 residues: Chorismate synthase (361 aa).

NADP(+) contacts are provided by arginine 48 and arginine 54. FMN is bound by residues 125-127 (RSS), 238-239 (NA), glycine 278, 293-297 (KPTSS), and arginine 319.

This sequence belongs to the chorismate synthase family. In terms of assembly, homotetramer. The cofactor is FMNH2.

It catalyses the reaction 5-O-(1-carboxyvinyl)-3-phosphoshikimate = chorismate + phosphate. The protein operates within metabolic intermediate biosynthesis; chorismate biosynthesis; chorismate from D-erythrose 4-phosphate and phosphoenolpyruvate: step 7/7. Catalyzes the anti-1,4-elimination of the C-3 phosphate and the C-6 proR hydrogen from 5-enolpyruvylshikimate-3-phosphate (EPSP) to yield chorismate, which is the branch point compound that serves as the starting substrate for the three terminal pathways of aromatic amino acid biosynthesis. This reaction introduces a second double bond into the aromatic ring system. The chain is Chorismate synthase from Edwardsiella ictaluri (strain 93-146).